The following is a 315-amino-acid chain: Homoserine kinase (315 aa).

97–107 (PPARGLGSSAT) lines the ATP pocket.

It belongs to the GHMP kinase family. Homoserine kinase subfamily.

The protein resides in the cytoplasm. The catalysed reaction is L-homoserine + ATP = O-phospho-L-homoserine + ADP + H(+). It functions in the pathway amino-acid biosynthesis; L-threonine biosynthesis; L-threonine from L-aspartate: step 4/5. Its function is as follows. Catalyzes the ATP-dependent phosphorylation of L-homoserine to L-homoserine phosphate. The chain is Homoserine kinase from Parasynechococcus marenigrum (strain WH8102).